Consider the following 118-residue polypeptide: Large ribosomal subunit protein bL20 (118 aa).

The protein belongs to the bacterial ribosomal protein bL20 family. In terms of assembly, part of the 50S ribosomal subunit. Contacts proteins L13 and L21.

In terms of biological role, binds directly to 23S rRNA, probably serving to organize its structure. In Deinococcus radiodurans (strain ATCC 13939 / DSM 20539 / JCM 16871 / CCUG 27074 / LMG 4051 / NBRC 15346 / NCIMB 9279 / VKM B-1422 / R1), this protein is Large ribosomal subunit protein bL20 (rplT).